We begin with the raw amino-acid sequence, 554 residues long: 3-(3-hydroxy-phenyl)propionate/3-hydroxycinnamic acid hydroxylase (554 aa).

FAD contacts are provided by residues Gln17–Lys46 and Phe285–Asp295.

It belongs to the PheA/TfdB FAD monooxygenase family. Requires FAD as cofactor.

The catalysed reaction is 3-(3-hydroxyphenyl)propanoate + NADH + O2 + H(+) = 3-(2,3-dihydroxyphenyl)propanoate + NAD(+) + H2O. It catalyses the reaction (2E)-3-(3-hydroxyphenyl)prop-2-enoate + NADH + O2 + H(+) = (2E)-3-(2,3-dihydroxyphenyl)prop-2-enoate + NAD(+) + H2O. The protein operates within aromatic compound metabolism; 3-phenylpropanoate degradation. In terms of biological role, catalyzes the insertion of one atom of molecular oxygen into position 2 of the phenyl ring of 3-(3-hydroxyphenyl)propionate (3-HPP) and hydroxycinnamic acid (3HCI). The chain is 3-(3-hydroxy-phenyl)propionate/3-hydroxycinnamic acid hydroxylase from Shigella sonnei (strain Ss046).